The primary structure comprises 162 residues: Toluate 1,2-dioxygenase subunit beta (162 aa).

This sequence belongs to the bacterial ring-hydroxylating dioxygenase beta subunit family. This dioxygenase system consists of three proteins: the two subunits of the hydroxylase component (XylX and XylY), and an electron transfer component (XylZ).

It functions in the pathway xenobiotic degradation; toluene degradation. This Pseudomonas putida (Arthrobacter siderocapsulatus) protein is Toluate 1,2-dioxygenase subunit beta (xylY).